The following is a 126-amino-acid chain: Large ribosomal subunit protein bL12 (126 aa).

It belongs to the bacterial ribosomal protein bL12 family. Homodimer. Part of the ribosomal stalk of the 50S ribosomal subunit. Forms a multimeric L10(L12)X complex, where L10 forms an elongated spine to which 2 to 4 L12 dimers bind in a sequential fashion. Binds GTP-bound translation factors.

In terms of biological role, forms part of the ribosomal stalk which helps the ribosome interact with GTP-bound translation factors. Is thus essential for accurate translation. In Desulforudis audaxviator (strain MP104C), this protein is Large ribosomal subunit protein bL12.